The sequence spans 400 residues: S-adenosylmethionine synthase (400 aa).

Position 137-142 (137-142 (GEGSGD)) interacts with ATP.

This sequence belongs to the AdoMet synthase 2 family. Requires Mg(2+) as cofactor.

The catalysed reaction is L-methionine + ATP + H2O = S-adenosyl-L-methionine + phosphate + diphosphate. Its pathway is amino-acid biosynthesis; S-adenosyl-L-methionine biosynthesis; S-adenosyl-L-methionine from L-methionine: step 1/1. Its function is as follows. Catalyzes the formation of S-adenosylmethionine from methionine and ATP. The chain is S-adenosylmethionine synthase from Haloarcula marismortui (strain ATCC 43049 / DSM 3752 / JCM 8966 / VKM B-1809) (Halobacterium marismortui).